We begin with the raw amino-acid sequence, 139 residues long: Envelope glycoprotein N (139 aa).

At 1 to 100 the chain is on the virion surface side; it reads MACGKTESGD…CHSHFYGLSV (100 aa). Residues 101 to 121 traverse the membrane as a helical segment; sequence SSFASIWMMVNAIVFICAFGV. The Intravirion portion of the chain corresponds to 122–139; sequence FMRHWCYKAFTSDTAKGY.

This sequence belongs to the herpesviridae glycoprotein N family. Interacts (via N-terminus) with gM (via N-terminus). The gM-gN heterodimer forms the gCII complex.

The protein localises to the virion membrane. It is found in the host membrane. The protein resides in the host Golgi apparatus. It localises to the host trans-Golgi network. Envelope glycoprotein necessary for proper maturation of gM and modulation of its membrane fusion activity. Also plays a critical role in virion morphogenesis. In Mus musculus (Mouse), this protein is Envelope glycoprotein N.